Reading from the N-terminus, the 305-residue chain is Tyrosine recombinase XerC (305 aa).

A Core-binding (CB) domain is found at 4-95; that stretch reads TSIQALINKW…AVKNFYRFLE (92 aa). Positions 116 to 298 constitute a Tyr recombinase domain; the sequence is LLPKALSEDD…SIKHLEAVYT (183 aa). Catalysis depends on residues Arg-159, Lys-182, His-250, Arg-253, and His-276. Tyr-285 functions as the O-(3'-phospho-DNA)-tyrosine intermediate in the catalytic mechanism.

The protein belongs to the 'phage' integrase family. XerC subfamily. As to quaternary structure, forms a cyclic heterotetrameric complex composed of two molecules of XerC and two molecules of XerD.

It localises to the cytoplasm. In terms of biological role, site-specific tyrosine recombinase, which acts by catalyzing the cutting and rejoining of the recombining DNA molecules. The XerC-XerD complex is essential to convert dimers of the bacterial chromosome into monomers to permit their segregation at cell division. It also contributes to the segregational stability of plasmids. The protein is Tyrosine recombinase XerC of Rickettsia rickettsii (strain Iowa).